We begin with the raw amino-acid sequence, 121 residues long: Small ribosomal subunit protein uS13 (121 aa).

The disordered stretch occupies residues S94–K121. Positions S106–K121 are enriched in basic residues.

This sequence belongs to the universal ribosomal protein uS13 family. In terms of assembly, part of the 30S ribosomal subunit. Forms a loose heterodimer with protein S19. Forms two bridges to the 50S subunit in the 70S ribosome.

Functionally, located at the top of the head of the 30S subunit, it contacts several helices of the 16S rRNA. In the 70S ribosome it contacts the 23S rRNA (bridge B1a) and protein L5 of the 50S subunit (bridge B1b), connecting the 2 subunits; these bridges are implicated in subunit movement. Contacts the tRNAs in the A and P-sites. This is Small ribosomal subunit protein uS13 from Exiguobacterium sp. (strain ATCC BAA-1283 / AT1b).